The sequence spans 323 residues: V-type ATP synthase subunit C (323 aa).

The protein belongs to the V-ATPase V0D/AC39 subunit family.

Produces ATP from ADP in the presence of a proton gradient across the membrane. The sequence is that of V-type ATP synthase subunit C from Thermus thermophilus (strain ATCC BAA-163 / DSM 7039 / HB27).